Consider the following 342-residue polypeptide: UDP-N-acetylenolpyruvoylglucosamine reductase (342 aa).

An FAD-binding PCMH-type domain is found at 17–192 (RFEAAARYAA…AEVTFALPVD (176 aa)). The active site involves arginine 168. Serine 242 (proton donor) is an active-site residue. Glutamate 338 is a catalytic residue.

It belongs to the MurB family. Requires FAD as cofactor.

It localises to the cytoplasm. The catalysed reaction is UDP-N-acetyl-alpha-D-muramate + NADP(+) = UDP-N-acetyl-3-O-(1-carboxyvinyl)-alpha-D-glucosamine + NADPH + H(+). It functions in the pathway cell wall biogenesis; peptidoglycan biosynthesis. Its function is as follows. Cell wall formation. The chain is UDP-N-acetylenolpyruvoylglucosamine reductase from Ralstonia nicotianae (strain ATCC BAA-1114 / GMI1000) (Ralstonia solanacearum).